A 238-amino-acid chain; its full sequence is Probable transcriptional regulatory protein SSU05_0402 (238 aa).

This sequence belongs to the TACO1 family. YeeN subfamily.

The protein localises to the cytoplasm. In Streptococcus suis (strain 05ZYH33), this protein is Probable transcriptional regulatory protein SSU05_0402.